We begin with the raw amino-acid sequence, 189 residues long: Chitin synthase 1 (189 aa).

Belongs to the chitin synthase family.

The protein localises to the cell membrane. The catalysed reaction is [(1-&gt;4)-N-acetyl-beta-D-glucosaminyl](n) + UDP-N-acetyl-alpha-D-glucosamine = [(1-&gt;4)-N-acetyl-beta-D-glucosaminyl](n+1) + UDP + H(+). Its function is as follows. Polymerizes chitin, a structural polymer of the cell wall and septum, by transferring the sugar moiety of UDP-GlcNAc to the non-reducing end of the growing chitin polymer. In Xylohypha bantiana, this protein is Chitin synthase 1 (CHS1).